Reading from the N-terminus, the 428-residue chain is F-box/LRR-repeat protein 3 (428 aa).

The span at 1 to 21 (MKRGGRDSDRNSSEEGTAEKS) shows a compositional bias: basic and acidic residues. The segment at 1–27 (MKRGGRDSDRNSSEEGTAEKSKKLRTT) is disordered. The F-box domain maps to 34–81 (CDWGNLLQDIILQVFKYLPLLDRAHASQVCRNWNQVFHMPDLWRCFEF). LRR repeat units follow at residues 119–146 (SSKE…GLIS), 181–207 (DTPV…KMSS), 208–233 (CPHV…ALNY), 234–259 (HLLS…RIDV), 316–341 (GRSV…VVCA), 343–368 (GLRP…GLGE), and 369–394 (CEVS…SIME).

In terms of assembly, part of the SCF (SKP1-CUL1-F-box) E3 ubiquitin-protein ligase complex SCF(FBXL3) composed of CUL1, SKP1, RBX1 and FBXL3. Interacts with CRY1 and CRY2 (phosphorylated). Interacts with HDAC3. Interacts with KDM8. In terms of processing, undergoes autophagy-mediated degradation in the liver in a time-dependent manner. In terms of tissue distribution, widely expressed.

Its subcellular location is the nucleus. The protein resides in the cytoplasm. It functions in the pathway protein modification; protein ubiquitination. Its function is as follows. Substrate-recognition component of the SCF(FBXL3) E3 ubiquitin ligase complex involved in circadian rhythm function. Plays a key role in the maintenance of both the speed and the robustness of the circadian clock oscillation. The SCF(FBXL3) complex mainly acts in the nucleus and mediates ubiquitination and subsequent degradation of CRY1 and CRY2. Activity of the SCF(FBXL3) complex is counteracted by the SCF(FBXL21) complex. The chain is F-box/LRR-repeat protein 3 (FBXL3) from Homo sapiens (Human).